We begin with the raw amino-acid sequence, 91 residues long: Probable Fe(2+)-trafficking protein (91 aa).

It belongs to the Fe(2+)-trafficking protein family.

In terms of biological role, could be a mediator in iron transactions between iron acquisition and iron-requiring processes, such as synthesis and/or repair of Fe-S clusters in biosynthetic enzymes. The polypeptide is Probable Fe(2+)-trafficking protein (Shewanella amazonensis (strain ATCC BAA-1098 / SB2B)).